Here is a 68-residue protein sequence, read N- to C-terminus: Large ribosomal subunit protein bL35 (68 aa).

Belongs to the bacterial ribosomal protein bL35 family.

This chain is Large ribosomal subunit protein bL35, found in Rickettsia akari (strain Hartford).